The primary structure comprises 303 residues: Taste receptor type 2 member 13 (303 aa).

The Extracellular segment spans residues 1 to 7 (MKSALPS). Residues 8–28 (IFTLVIIAEFIIGNLSNGFIV) traverse the membrane as a helical segment. The Cytoplasmic portion of the chain corresponds to 29-55 (LINCIDWVSKRELSSVDKLLIILAISR). Residues 56 to 76 (IGLIWEILVSWFLALHYLAIF) form a helical membrane-spanning segment. Over 77–85 (VSGTGLRIM) the chain is Extracellular. The helical transmembrane segment at 86-106 (IFSWIVSNHFNLWLATILSIF) threads the bilayer. Topologically, residues 107 to 128 (YLLKIASFSSPAFLYLKWRVNK) are cytoplasmic. The helical transmembrane segment at 129 to 149 (VILLILLGTLVFLFLNLIQIN) threads the bilayer. Topologically, residues 150 to 184 (MHIKDWLDRYERNTTWNFSMSDFETFSVSVKFTMT) are extracellular. N-linked (GlcNAc...) asparagine glycosylation is found at Asn-162 and Asn-166. Residues 185–205 (MFSLTPFTVAFISFLLLIFSL) form a helical membrane-spanning segment. Over 206 to 232 (QKHLQKMQLNYKGHRDPKTKVHTNALK) the chain is Cytoplasmic. The chain crosses the membrane as a helical span at residues 233–253 (IVISFLLFYASFFLCVLXSWI). The Extracellular segment spans residues 254 to 261 (SELYQNTV). Residues 262-282 (IYMLCETIGVFYPSSHSFLLI) form a helical membrane-spanning segment. Over 283–303 (LGNAKLRQAFLLVAAKVWAKR) the chain is Cytoplasmic.

The protein belongs to the G-protein coupled receptor T2R family.

The protein resides in the membrane. Its function is as follows. Receptor that may play a role in the perception of bitterness and is gustducin-linked. May play a role in sensing the chemical composition of the gastrointestinal content. The activity of this receptor may stimulate alpha gustducin, mediate PLC-beta-2 activation and lead to the gating of TRPM5. The sequence is that of Taste receptor type 2 member 13 (TAS2R13) from Gorilla gorilla gorilla (Western lowland gorilla).